Reading from the N-terminus, the 258-residue chain is Hydroxyacylglutathione hydrolase cytoplasmic (258 aa).

Zn(2+)-binding residues include His54 and His56. Residues Asp58 and His59 each contribute to the Fe cation site. Zn(2+) is bound by residues His112 and Asp135. Asp135 contacts Fe cation. Substrate is bound by residues 144 to 146 and 174 to 176; these read KFF and HEY. Fe cation is bound at residue His174.

Belongs to the metallo-beta-lactamase superfamily. Glyoxalase II family. As to quaternary structure, homodimer. The cofactor is Fe(2+). It depends on Zn(2+) as a cofactor. Fe(3+) serves as cofactor. In terms of tissue distribution, mainly expressed in flowers and flower buds. Also detected in roots and leaves.

The protein localises to the cytoplasm. The catalysed reaction is an S-(2-hydroxyacyl)glutathione + H2O = a 2-hydroxy carboxylate + glutathione + H(+). Its pathway is secondary metabolite metabolism; methylglyoxal degradation; (R)-lactate from methylglyoxal: step 2/2. Its function is as follows. Thiolesterase that catalyzes the hydrolysis of S-D-lactoyl-glutathione to form glutathione and D-lactic acid. This chain is Hydroxyacylglutathione hydrolase cytoplasmic (GLX2-2), found in Arabidopsis thaliana (Mouse-ear cress).